Here is a 216-residue protein sequence, read N- to C-terminus: Probable GTP-binding protein EngB (216 aa).

The region spanning 27-201 is the EngB-type G domain; sequence GGVEIAFAGR…AQTLTGWYLA (175 aa). GTP is bound by residues 35-42, 62-66, 80-83, 147-150, and 180-182; these read GRSNAGKS, GRTQL, DLPG, TKAD, and FSS. Residues Ser-42 and Thr-64 each coordinate Mg(2+).

The protein belongs to the TRAFAC class TrmE-Era-EngA-EngB-Septin-like GTPase superfamily. EngB GTPase family. It depends on Mg(2+) as a cofactor.

Functionally, necessary for normal cell division and for the maintenance of normal septation. In Aeromonas hydrophila subsp. hydrophila (strain ATCC 7966 / DSM 30187 / BCRC 13018 / CCUG 14551 / JCM 1027 / KCTC 2358 / NCIMB 9240 / NCTC 8049), this protein is Probable GTP-binding protein EngB.